The following is a 35-amino-acid chain: Photosystem II reaction center protein T (35 aa).

The helical transmembrane segment at 3–23 (ALVYTFLLVSTLGIIFFAIFF) threads the bilayer.

Belongs to the PsbT family. In terms of assembly, PSII is composed of 1 copy each of membrane proteins PsbA, PsbB, PsbC, PsbD, PsbE, PsbF, PsbH, PsbI, PsbJ, PsbK, PsbL, PsbM, PsbT, PsbY, PsbZ, Psb30/Ycf12, at least 3 peripheral proteins of the oxygen-evolving complex and a large number of cofactors. It forms dimeric complexes.

Its subcellular location is the plastid. The protein localises to the chloroplast thylakoid membrane. Found at the monomer-monomer interface of the photosystem II (PS II) dimer, plays a role in assembly and dimerization of PSII. PSII is a light-driven water plastoquinone oxidoreductase, using light energy to abstract electrons from H(2)O, generating a proton gradient subsequently used for ATP formation. The sequence is that of Photosystem II reaction center protein T from Nelumbo lutea (American lotus).